A 273-amino-acid chain; its full sequence is 4-hydroxy-tetrahydrodipicolinate reductase (273 aa).

Residues 12 to 17 (GAGGRM) and Glu-38 contribute to the NAD(+) site. Position 39 (Arg-39) interacts with NADP(+). NAD(+)-binding positions include 102–104 (GTT) and 126–129 (AANF). The active-site Proton donor/acceptor is His-159. His-160 serves as a coordination point for (S)-2,3,4,5-tetrahydrodipicolinate. Lys-163 (proton donor) is an active-site residue. 169–170 (GT) contacts (S)-2,3,4,5-tetrahydrodipicolinate.

It belongs to the DapB family. Homotetramer.

It is found in the cytoplasm. The enzyme catalyses (S)-2,3,4,5-tetrahydrodipicolinate + NAD(+) + H2O = (2S,4S)-4-hydroxy-2,3,4,5-tetrahydrodipicolinate + NADH + H(+). It catalyses the reaction (S)-2,3,4,5-tetrahydrodipicolinate + NADP(+) + H2O = (2S,4S)-4-hydroxy-2,3,4,5-tetrahydrodipicolinate + NADPH + H(+). The protein operates within amino-acid biosynthesis; L-lysine biosynthesis via DAP pathway; (S)-tetrahydrodipicolinate from L-aspartate: step 4/4. Its function is as follows. Catalyzes the conversion of 4-hydroxy-tetrahydrodipicolinate (HTPA) to tetrahydrodipicolinate. The chain is 4-hydroxy-tetrahydrodipicolinate reductase from Yersinia pestis bv. Antiqua (strain Antiqua).